A 276-amino-acid chain; its full sequence is 3-methyl-2-oxobutanoate hydroxymethyltransferase (276 aa).

Asp46 and Asp85 together coordinate Mg(2+). Residues 46-47 (DS), Asp85, and Lys115 contribute to the 3-methyl-2-oxobutanoate site. Glu117 contributes to the Mg(2+) binding site. The active-site Proton acceptor is the Glu184.

The protein belongs to the PanB family. In terms of assembly, homodecamer; pentamer of dimers. It depends on Mg(2+) as a cofactor.

It is found in the cytoplasm. The enzyme catalyses 3-methyl-2-oxobutanoate + (6R)-5,10-methylene-5,6,7,8-tetrahydrofolate + H2O = 2-dehydropantoate + (6S)-5,6,7,8-tetrahydrofolate. It participates in cofactor biosynthesis; (R)-pantothenate biosynthesis; (R)-pantoate from 3-methyl-2-oxobutanoate: step 1/2. Catalyzes the reversible reaction in which hydroxymethyl group from 5,10-methylenetetrahydrofolate is transferred onto alpha-ketoisovalerate to form ketopantoate. The sequence is that of 3-methyl-2-oxobutanoate hydroxymethyltransferase from Heliobacterium modesticaldum (strain ATCC 51547 / Ice1).